Reading from the N-terminus, the 132-residue chain is Pro-MCH 2 (132 aa).

Positions 1-24 (MRDSVLSVIFALALFLECYTPSMA) are cleaved as a signal peptide. Cysteines 120 and 129 form a disulfide.

The protein belongs to the melanin-concentrating hormone family. Pituitary gland. Produced in neurons of lateral basal hypothalamus which project both to the brain and to the neural lobe of the pituitary gland from where MCH is released.

Its function is as follows. Plays a role in skin pigmentation by antagonizing the action of melanotropin alpha. Induces melanin concentration within the melanophores. May participate in the control of the hypothalamo-pituitary adrenal gland axis by inhibiting the release of ACTH. The chain is Pro-MCH 2 (mch2) from Oncorhynchus keta (Chum salmon).